We begin with the raw amino-acid sequence, 336 residues long: Dihydroorotate dehydrogenase (quinone) (336 aa).

Residues 62–66 (AGLDK) and Thr86 each bind FMN. Lys66 serves as a coordination point for substrate. Position 111–115 (111–115 (NRMGF)) interacts with substrate. Residues Asn139 and Asn172 each contribute to the FMN site. Substrate is bound at residue Asn172. Catalysis depends on Ser175, which acts as the Nucleophile. Asn177 serves as a coordination point for substrate. FMN-binding residues include Lys217 and Thr245. 246-247 (NT) provides a ligand contact to substrate. Residues Gly268, Gly297, and 318–319 (YS) contribute to the FMN site.

This sequence belongs to the dihydroorotate dehydrogenase family. Type 2 subfamily. Monomer. The cofactor is FMN.

The protein localises to the cell membrane. The catalysed reaction is (S)-dihydroorotate + a quinone = orotate + a quinol. It participates in pyrimidine metabolism; UMP biosynthesis via de novo pathway; orotate from (S)-dihydroorotate (quinone route): step 1/1. Its function is as follows. Catalyzes the conversion of dihydroorotate to orotate with quinone as electron acceptor. In Escherichia coli (strain UTI89 / UPEC), this protein is Dihydroorotate dehydrogenase (quinone).